We begin with the raw amino-acid sequence, 366 residues long: GTP-binding protein 10 (366 aa).

The Obg domain occupies 13–148 (GNFIDNLRIF…RIVHLDLKVI (136 aa)). The 196-residue stretch at 149–344 (ADVGLVGFPN…LKSCIRKALD (196 aa)) folds into the OBG-type G domain. Residues 155–162 (GFPNAGKS), 202–206 (DLPGL), and 278–281 (NKMD) contribute to the GTP site. Over residues 346 to 355 (QDGKESDAHR) the composition is skewed to basic and acidic residues. Residues 346–366 (QDGKESDAHRSKQLLNLQSSS) are disordered.

The protein belongs to the TRAFAC class OBG-HflX-like GTPase superfamily. OBG GTPase family.

It localises to the nucleus. Its subcellular location is the nucleolus. Its function is as follows. May be involved in the ribosome maturation process. In Mus musculus (Mouse), this protein is GTP-binding protein 10 (Gtpbp10).